A 347-amino-acid chain; its full sequence is Large ribosomal subunit protein uL10 (347 aa).

A disordered region spans residues 310 to 347 (ATVAAPAAEEEKKEEEPEEEEEDHAEEDGMAGLGALFG). Acidic residues predominate over residues 325–338 (EPEEEEEDHAEEDG).

It belongs to the universal ribosomal protein uL10 family. In terms of assembly, part of the 50S ribosomal subunit. Forms part of the ribosomal stalk which helps the ribosome interact with GTP-bound translation factors. Forms a heptameric L10(L12)2(L12)2(L12)2 complex, where L10 forms an elongated spine to which the L12 dimers bind in a sequential fashion.

Functionally, forms part of the ribosomal stalk, playing a central role in the interaction of the ribosome with GTP-bound translation factors. This chain is Large ribosomal subunit protein uL10, found in Methanosarcina mazei (strain ATCC BAA-159 / DSM 3647 / Goe1 / Go1 / JCM 11833 / OCM 88) (Methanosarcina frisia).